We begin with the raw amino-acid sequence, 428 residues long: Elongation factor 1-alpha (428 aa).

The tr-type G domain maps to 5-215; that stretch reads KPHVNIVFIG…ALDQIPEPPK (211 aa). A G1 region spans residues 14–21; it reads GHVDHGKS. A GTP-binding site is contributed by 14 to 21; the sequence is GHVDHGKS. S21 serves as a coordination point for Mg(2+). The G2 stretch occupies residues 68 to 72; sequence GITID. A G3 region spans residues 89–92; that stretch reads DAPG. GTP is bound by residues 89–93 and 144–147; these read DAPGH and NKMD. Residues 144 to 147 form a G4 region; it reads NKMD. The tract at residues 181–183 is G5; the sequence is SAW.

It belongs to the TRAFAC class translation factor GTPase superfamily. Classic translation factor GTPase family. EF-Tu/EF-1A subfamily.

It localises to the cytoplasm. The enzyme catalyses GTP + H2O = GDP + phosphate + H(+). GTP hydrolase that promotes the GTP-dependent binding of aminoacyl-tRNA to the A-site of ribosomes during protein biosynthesis. The protein is Elongation factor 1-alpha of Thermococcus gammatolerans (strain DSM 15229 / JCM 11827 / EJ3).